Here is a 233-residue protein sequence, read N- to C-terminus: Zinc metalloproteinase recombinant fibrinogenase II (233 aa).

The region spanning 19–215 is the Peptidase M12B domain; that stretch reads KYVETVFVVD…HNPECIDNEP (197 aa). 2 residues coordinate Ca(2+): glutamate 22 and aspartate 106. Intrachain disulfides connect cysteine 130-cysteine 210, cysteine 170-cysteine 194, and cysteine 172-cysteine 177. A Zn(2+)-binding site is contributed by histidine 155. The active site involves glutamate 156. 2 residues coordinate Zn(2+): histidine 159 and histidine 165. Residue asparagine 193 is glycosylated (N-linked (GlcNAc...) asparagine). Ca(2+)-binding residues include cysteine 210, asparagine 213, asparagine 228, leucine 230, and glutamate 232.

Belongs to the venom metalloproteinase (M12B) family. P-III subfamily. Zn(2+) serves as cofactor. Expressed by the venom gland.

It localises to the secreted. Its activity is regulated as follows. Inhibited by PMSF and EDTA. Slightly inhibited by Cu(2+) and Zn(2+). Not inhibited by aprotinin, SBTI, Ca(2+), Mg(2+), Na(+) and K(+). Functionally, snake venom zinc metalloprotease that acts at several levels. It has direct fibrino(geno)lytic activity (Aalpha chain of fibrinogen is cleaved quickly, Bbeta chain slowly, and gamma chain even more slowly) and degradation of TNF-alpha. These activities permit to protect against sepsis and disseminated intravascular coagulation. It inhibits ADP-induced platelet aggregation in human platelet-rich plasma (IC(50)=65.4 ug/ml). It decreases the activity of complement by degrading human C5, C6 and C9 in vitro, decreasing serum levels of C1q, C3 and C4 in rat, and inhibiting the MAC deposition on HUVECs membrane. This inhibition of complement protects against hyperacute rejection that is the main barrier in xenotransplantation. Has preference for Lys at the P1 position. Cleaves insulin B chain at '36-Val-|-Glu-37', '39-Leu-|-Tyr-40', and '48-Phe-|-Phe-49' bonds. Also cleaves fibronectin and type IV collagen. The polypeptide is Zinc metalloproteinase recombinant fibrinogenase II (Deinagkistrodon acutus (Hundred-pace snake)).